Consider the following 318-residue polypeptide: Ribonuclease Z (318 aa).

Positions 62, 64, 66, 67, 139, 210, and 268 each coordinate Zn(2+). Asp-66 acts as the Proton acceptor in catalysis.

It belongs to the RNase Z family. As to quaternary structure, homodimer. Zn(2+) is required as a cofactor.

The enzyme catalyses Endonucleolytic cleavage of RNA, removing extra 3' nucleotides from tRNA precursor, generating 3' termini of tRNAs. A 3'-hydroxy group is left at the tRNA terminus and a 5'-phosphoryl group is left at the trailer molecule.. Zinc phosphodiesterase, which displays some tRNA 3'-processing endonuclease activity. Probably involved in tRNA maturation, by removing a 3'-trailer from precursor tRNA. The sequence is that of Ribonuclease Z from Microcystis aeruginosa (strain NIES-843 / IAM M-2473).